The following is a 431-amino-acid chain: Urokinase-type plasminogen activator (431 aa).

The signal sequence occupies residues 1–20 (MRALLARLLLCVLVVSDSKG). The EGF-like domain occupies 27 to 63 (VPSNCDCLNGGTCVSNKYFSNIHWCNCPKKFGGQHCE). Cystine bridges form between C31–C39, C33–C51, C53–C62, C70–C151, C91–C133, and C122–C146. Residues 34–57 (LNGGTCVSNKYFSNIHWCNCPKKF) are binds urokinase plasminogen activator surface receptor. The Kringle domain maps to 69–151 (TCYEGNGHFY…LVQECMVHDC (83 aa)). The connecting peptide stretch occupies residues 152–178 (ADGKKPSSPPEELKFQCGQKTLRPRFK). S158 is subject to Phosphoserine. 6 cysteine pairs are disulfide-bonded: C168/C299, C209/C225, C217/C288, C313/C382, C345/C361, and C372/C400. In terms of domain architecture, Peptidase S1 spans 179–424 (IVGGEFTTIE…FLPWIRSHTK (246 aa)). Residues H224 and D275 each act as charge relay system in the active site. Residue N322 is glycosylated (N-linked (GlcNAc...) asparagine). S323 is modified (phosphoserine). S376 functions as the Charge relay system in the catalytic mechanism.

It belongs to the peptidase S1 family. In terms of assembly, found in high and low molecular mass forms. Each consists of two chains, A and B. The high molecular mass form contains a long chain A which is cleaved to yield a short chain A. Forms heterodimer with SERPINA5. Binds LRP1B; binding is followed by internalization and degradation. Interacts with MRC2. Interacts with PLAUR. In complex with SERPINE1, interacts with PLAUR/uPAR. Interacts with SORL1 and LRP1, either alone or in complex with SERPINE1; these interactions are abolished in the presence of LRPAP1/RAP. The ternary complex composed of PLAUR-PLAU-PAI1 also interacts with SORLA. Post-translationally, phosphorylation of Ser-158 and Ser-323 abolishes proadhesive ability but does not interfere with receptor binding. In terms of processing, produced as an inactive single-chain protein (pro-uPA or sc-uPA), is processed into the active disulfide-linked two-chain form of PLAU/uPA by a proteolytic event mediated, at least, by TMPRSS4.

It is found in the secreted. It catalyses the reaction Specific cleavage of Arg-|-Val bond in plasminogen to form plasmin.. Its activity is regulated as follows. Inhibited by SERPINA5. Inhibited by SERPINE1. Functionally, specifically cleaves the zymogen plasminogen to form the active enzyme plasmin. This Pongo abelii (Sumatran orangutan) protein is Urokinase-type plasminogen activator (PLAU).